A 189-amino-acid chain; its full sequence is Anthranilate synthase component 2 (189 aa).

The Glutamine amidotransferase type-1 domain maps to Met-1–Asp-189. Gly-52–Gly-54 is a binding site for L-glutamine. Catalysis depends on Cys-79, which acts as the Nucleophile; for GATase activity. Residues Gln-83 and Ser-129–Leu-130 each bind L-glutamine. Active-site residues include His-169 and Glu-171.

As to quaternary structure, tetramer of two components I and two components II.

The protein resides in the plastid. It is found in the chloroplast. The enzyme catalyses chorismate + L-glutamine = anthranilate + pyruvate + L-glutamate + H(+). It functions in the pathway amino-acid biosynthesis; L-tryptophan biosynthesis; L-tryptophan from chorismate: step 1/5. The sequence is that of Anthranilate synthase component 2 (trpG) from Porphyra purpurea (Red seaweed).